The chain runs to 393 residues: Thermostable carboxypeptidase 2 (393 aa).

Positions 104, 109, and 245 each coordinate Zn(2+). Y302 serves as the catalytic Proton donor. E373 functions as the Nucleophile in the catalytic mechanism.

The protein belongs to the peptidase M20 family. Homotetramer. The cofactor is Zn(2+).

Its function is as follows. Can release basic, acidic, aromatic, and, to a lesser extent, aliphatic amino acids. This is Thermostable carboxypeptidase 2 (cpsA2) from Saccharolobus solfataricus (strain ATCC 35092 / DSM 1617 / JCM 11322 / P2) (Sulfolobus solfataricus).